The following is a 956-amino-acid chain: Replication factor C subunit 1 (956 aa).

Basic and acidic residues-rich tracts occupy residues 1–15 (MSDI…HEKG) and 50–74 (TADR…KEVE). Disordered stretches follow at residues 1 to 206 (MSDI…TPDC) and 286 to 332 (KKSL…AKGK). Gly residues predominate over residues 158-183 (RGRGGRAAPGASTGGRGRGGGRGGFM). 2 stretches are compositionally biased toward basic and acidic residues: residues 186–200 (GERK…KEVP) and 288–298 (SLPERSNKGTE). The region spanning 202–292 (GTPDCLAGLT…KPVKKSLPER (91 aa)) is the BRCT domain. 399-406 (SGTPGIGK) contributes to the ATP binding site. Residues 858-956 (LEPTVDSLRD…GRGSGAKRKR (99 aa)) form a disordered region. Residues 866 to 892 (RDEDGEPLADNEEGNGSDAEEDSEEAT) are compositionally biased toward acidic residues. Residues 916 to 925 (KGAGSSGSRK) are compositionally biased toward low complexity.

The protein belongs to the activator 1 large subunit family. In terms of assembly, heterotetramer of subunits RFC2, RFC3, RFC4 and RFC5 that can form a complex with RFC1. Expressed at high levels in flowers and siliques, and at lower levels in roots, stems and leaves.

Its subcellular location is the nucleus. Plays a role as mediator of transcriptional gene silencing (TGS), DNA replication, DNA repair, hypersensitive response (HR) and telomere length regulation. Is required in meiosis for DNA double-strand break (DSB) repair during meiotic homologous recombination. May participate in the RAD51-mediated recombination intermediate repair process. Is important for lagging strand synthesis. Promotes meiotic recombination via a specific pathway for crossovers (COs) that involves the formation of double Holliday Junction (dHJ) intermediates. This is Replication factor C subunit 1 (RFC1) from Arabidopsis thaliana (Mouse-ear cress).